The sequence spans 478 residues: MTMATTVSKGKVTQVIGAVVDVQFEGVLPAILNALETTNNGKKLILEVAQHLGENTVRCIAMDATEGLVRGAPVSDSGTPISVPVGNATLGRILNVVGEPIDERGPIAATEKRAIHQKAPDFQSQSTESQILVTGIKVIDLLAPYSKGGKIGLFGGAGVGKTVLIQELINNIAKVHSGYSVFAGVGERTREGNDLYHEFIESGVINIDDLEKSKVALVYGQMNEPPGARARVALTGLTLAEQFRDQSGTDVLFFVDNIFRFTQAGSEVSALLGRIPSAVGYQPTLATDMGQLQERITSTKAGSITSVQAIYVPADDLTDPAPATSFAHLDATTTLSRAISELGIYPAVDPLDSTSRLMDPQILGEEHYNTARAVQGILQRYKSLQDIIAILGMDELSEEDKLTVARARKIQRFLSQPFDVAQVFTGSPGVQVPLDKTIASFKAVVAGEYDHLPEAAFYMVGDIEEAKAKAAKLAAAAA.

155–162 provides a ligand contact to ATP; sequence GGAGVGKT.

The protein belongs to the ATPase alpha/beta chains family. F-type ATPases have 2 components, CF(1) - the catalytic core - and CF(0) - the membrane proton channel. CF(1) has five subunits: alpha(3), beta(3), gamma(1), delta(1), epsilon(1). CF(0) has three main subunits: a(1), b(2) and c(9-12). The alpha and beta chains form an alternating ring which encloses part of the gamma chain. CF(1) is attached to CF(0) by a central stalk formed by the gamma and epsilon chains, while a peripheral stalk is formed by the delta and b chains.

Its subcellular location is the cell inner membrane. It catalyses the reaction ATP + H2O + 4 H(+)(in) = ADP + phosphate + 5 H(+)(out). In terms of biological role, produces ATP from ADP in the presence of a proton gradient across the membrane. The catalytic sites are hosted primarily by the beta subunits. The sequence is that of ATP synthase subunit beta from Fuscovulum blasticum (Rhodobacter blasticus).